A 501-amino-acid polypeptide reads, in one-letter code: Glycerol kinase (501 aa).

Threonine 17 is an ADP binding site. Residues threonine 17, threonine 18, and serine 19 each contribute to the ATP site. Threonine 17 contributes to the sn-glycerol 3-phosphate binding site. Arginine 21 is an ADP binding site. 4 residues coordinate sn-glycerol 3-phosphate: arginine 87, glutamate 88, tyrosine 139, and aspartate 243. Residues arginine 87, glutamate 88, tyrosine 139, aspartate 243, and glutamine 244 each coordinate glycerol. 2 residues coordinate ADP: threonine 265 and glycine 308. Threonine 265, glycine 308, glutamine 312, and glycine 409 together coordinate ATP. Residues glycine 409 and asparagine 413 each contribute to the ADP site.

This sequence belongs to the FGGY kinase family.

The enzyme catalyses glycerol + ATP = sn-glycerol 3-phosphate + ADP + H(+). It functions in the pathway polyol metabolism; glycerol degradation via glycerol kinase pathway; sn-glycerol 3-phosphate from glycerol: step 1/1. Inhibited by fructose 1,6-bisphosphate (FBP). Functionally, key enzyme in the regulation of glycerol uptake and metabolism. Catalyzes the phosphorylation of glycerol to yield sn-glycerol 3-phosphate. In Pseudomonas fluorescens (strain ATCC BAA-477 / NRRL B-23932 / Pf-5), this protein is Glycerol kinase.